The primary structure comprises 803 residues: Bromodomain-containing protein 2 (803 aa).

An N-acetylmethionine modification is found at Met1. Thr6 bears the Phosphothreonine mark. A Phosphoserine modification is found at Ser37. The tract at residues 53 to 73 is disordered; the sequence is ALQLTPANPPPPEVSNPKKPG. A Bromo 1 domain is found at 74–180; the sequence is RVTNQLQYLH…KIFLQKVASM (107 aa). Residues Asp112, Tyr155, Asn156, Lys157, Asp160, and Asp161 each contribute to the a protein site. 3 disordered regions span residues 268 to 348, 456 to 652, and 739 to 803; these read PPAQ…KLSE, EPLE…KRQL, and EKRL…SDSG. The segment covering 285 to 298 has biased composition (low complexity); that stretch reads TTTPTPTAILAPGS. Phosphoserine occurs at positions 298 and 301. Positions 316–332 are enriched in basic and acidic residues; sequence VRRESGRPIKPPRKDLP. The Bromo 2 domain occupies 344-453; that stretch reads GKLSEQLKHC…DVFEFRYAKM (110 aa). Residues 481–515 are compositionally biased toward acidic residues; the sequence is SSEESSSESSSEEEEEEDEDEEEEEEESESSDSEE. Residues 545 to 567 are compositionally biased toward basic residues; it reads KPKRKREKKEKKKKRKAEKHRGR. The Nuclear localization signal motif lies at 556–560; sequence KKKRK. The segment covering 623 to 632 has biased composition (low complexity); that stretch reads KTAPPALPAG. The region spanning 634–716 is the NET domain; that stretch reads DSEEEEESRP…SCLRKKPRKP (83 aa). Ser635 carries the phosphoserine modification. Over residues 641–652 the composition is skewed to basic and acidic residues; the sequence is SRPMSYDEKRQL. Residues 777 to 797 show a composition bias toward low complexity; that stretch reads SASSSSSDSSSSSSSSSSSDT.

Belongs to the BET family. In terms of assembly, homodimer. Interacts with E2F1. Interacts with (acetylated) STAT3; promoting STAT3 recruitment to chromatin. Interacts with CTCF; promoting BRD2 recruitment to chromatin.

Its subcellular location is the nucleus. It localises to the chromosome. In terms of biological role, chromatin reader protein that specifically recognizes and binds histone H4 acetylated at 'Lys-5' and 'Lys-12' (H4K5ac and H4K12ac, respectively), thereby controlling gene expression and remodeling chromatin structures. Recruits transcription factors and coactivators to target gene sites, and activates RNA polymerase II machinery for transcriptional elongation. Plays a key role in genome compartmentalization via its association with CTCF and cohesin: recruited to chromatin by CTCF and promotes formation of topologically associating domains (TADs) via its ability to bind acetylated histones, contributing to CTCF boundary formation and enhancer insulation. Also recognizes and binds acetylated non-histone proteins, such as STAT3. Involved in inflammatory response by regulating differentiation of naive CD4(+) T-cells into T-helper Th17: recognizes and binds STAT3 acetylated at 'Lys-87', promoting STAT3 recruitment to chromatin. In addition to acetylated lysines, also recognizes and binds lysine residues on histones that are both methylated and acetylated on the same side chain to form N6-acetyl-N6-methyllysine (Kacme), an epigenetic mark of active chromatin associated with increased transcriptional initiation. Specifically binds histone H4 acetyl-methylated at 'Lys-5' and 'Lys-12' (H4K5acme and H4K12acme, respectively). The sequence is that of Bromodomain-containing protein 2 (BRD2) from Bos taurus (Bovine).